We begin with the raw amino-acid sequence, 407 residues long: tRNA(Ile2) 2-agmatinylcytidine synthetase TiaS (407 aa).

It belongs to the TiaS family.

It is found in the cytoplasm. The enzyme catalyses cytidine(34) in tRNA(Ile2) + agmatine + ATP + H2O = 2-agmatinylcytidine(34) in tRNA(Ile2) + AMP + 2 phosphate + 2 H(+). In terms of biological role, ATP-dependent agmatine transferase that catalyzes the formation of 2-agmatinylcytidine (agm2C) at the wobble position (C34) of tRNA(Ile2), converting the codon specificity from AUG to AUA. In Caldivirga maquilingensis (strain ATCC 700844 / DSM 13496 / JCM 10307 / IC-167), this protein is tRNA(Ile2) 2-agmatinylcytidine synthetase TiaS.